Consider the following 139-residue polypeptide: Endoribonuclease YbeY (139 aa).

Residues histidine 99, histidine 103, and histidine 109 each coordinate Zn(2+).

Belongs to the endoribonuclease YbeY family. The cofactor is Zn(2+).

The protein localises to the cytoplasm. In terms of biological role, single strand-specific metallo-endoribonuclease involved in late-stage 70S ribosome quality control and in maturation of the 3' terminus of the 16S rRNA. This is Endoribonuclease YbeY from Sulfurimonas denitrificans (strain ATCC 33889 / DSM 1251) (Thiomicrospira denitrificans (strain ATCC 33889 / DSM 1251)).